We begin with the raw amino-acid sequence, 180 residues long: MSRIGNRILTIPAGVEVSVASDNTVTVKGSKGTLTQKFAEVITIKVEGAELSTTRANEIKHTKQLHGTTNSLLQGMLIGVSEGFKKTLDINGVGYRAALAGSKLNLSLGYSHPVEYTIPQGITVECPKPTQIIISGIDKQVVGQVAAEIRSYRRPEPYKGKGIKYSDEIIIRKEGKAAGK.

The protein belongs to the universal ribosomal protein uL6 family. Part of the 50S ribosomal subunit.

This protein binds to the 23S rRNA, and is important in its secondary structure. It is located near the subunit interface in the base of the L7/L12 stalk, and near the tRNA binding site of the peptidyltransferase center. This Mesoplasma florum (strain ATCC 33453 / NBRC 100688 / NCTC 11704 / L1) (Acholeplasma florum) protein is Large ribosomal subunit protein uL6.